The following is a 200-amino-acid chain: Molybdenum cofactor guanylyltransferase (200 aa).

GTP contacts are provided by residues Leu-10 to Gly-12, Lys-23, Asn-51, Asp-69, and Asp-99. Residue Asp-99 participates in Mg(2+) binding.

Belongs to the MobA family. Monomer. Mg(2+) serves as cofactor.

The protein localises to the cytoplasm. It carries out the reaction Mo-molybdopterin + GTP + H(+) = Mo-molybdopterin guanine dinucleotide + diphosphate. Transfers a GMP moiety from GTP to Mo-molybdopterin (Mo-MPT) cofactor (Moco or molybdenum cofactor) to form Mo-molybdopterin guanine dinucleotide (Mo-MGD) cofactor. In Shewanella pealeana (strain ATCC 700345 / ANG-SQ1), this protein is Molybdenum cofactor guanylyltransferase.